A 397-amino-acid polypeptide reads, in one-letter code: T-box transcription factor TBX19 (397 aa).

Positions 48–216 form a DNA-binding region, T-box; that stretch reads LWQRFREVTN…YNPFAKAFLD (169 aa). The segment at 220 to 248 is disordered; the sequence is RNHPKDAPEAASEGQHMTYSHSPQAPHGC.

It localises to the nucleus. Functionally, may be involved in the initial formation of the chordamesoderm. The polypeptide is T-box transcription factor TBX19 (Gallus gallus (Chicken)).